Here is a 363-residue protein sequence, read N- to C-terminus: Branched-chain-amino-acid aminotransferase 2 (363 aa).

N6-(pyridoxal phosphate)lysine is present on K197.

Belongs to the class-IV pyridoxal-phosphate-dependent aminotransferase family. The cofactor is pyridoxal 5'-phosphate.

It carries out the reaction L-leucine + 2-oxoglutarate = 4-methyl-2-oxopentanoate + L-glutamate. The catalysed reaction is L-isoleucine + 2-oxoglutarate = (S)-3-methyl-2-oxopentanoate + L-glutamate. The enzyme catalyses L-valine + 2-oxoglutarate = 3-methyl-2-oxobutanoate + L-glutamate. It participates in amino-acid biosynthesis; L-isoleucine biosynthesis; L-isoleucine from 2-oxobutanoate: step 4/4. The protein operates within amino-acid biosynthesis; L-leucine biosynthesis; L-leucine from 3-methyl-2-oxobutanoate: step 4/4. Its pathway is amino-acid biosynthesis; L-valine biosynthesis; L-valine from pyruvate: step 4/4. Inhibited by canaline. Transaminates branched-chain amino acids and ketoglutarate. The polypeptide is Branched-chain-amino-acid aminotransferase 2 (ilvK) (Bacillus subtilis (strain 168)).